We begin with the raw amino-acid sequence, 251 residues long: tRNA pseudouridine synthase A (251 aa).

Asp56 functions as the Nucleophile in the catalytic mechanism. Residue Tyr110 participates in substrate binding.

Belongs to the tRNA pseudouridine synthase TruA family.

It catalyses the reaction uridine(38/39/40) in tRNA = pseudouridine(38/39/40) in tRNA. Its function is as follows. Formation of pseudouridine at positions 38, 39 and 40 in the anticodon stem and loop of transfer RNAs. This Picrophilus torridus (strain ATCC 700027 / DSM 9790 / JCM 10055 / NBRC 100828 / KAW 2/3) protein is tRNA pseudouridine synthase A.